The following is a 1028-amino-acid chain: Multidrug resistance protein MdtC (1028 aa).

The next 12 membrane-spanning stretches (helical) occupy residues 3 to 23 (FFALFIYRPVATILISIAITL), 333 to 353 (EVEQTLVISVALVILVVFLFL), 360 to 380 (LIPAVAVPVSLIGTFAAMYLC), 387 to 407 (LSLMALTIATGFVVDDAIVVL), 431 to 451 (VGFTVLSMSLSLVAVFLPLLL), 463 to 483 (FAVTLSVAIGISLLVSLTLTP), 528 to 548 (LVGVVLLGTIALNIWLYISIP), 853 to 873 (VILILAAIATVYIVLGILYES), 875 to 895 (VHPLTILSTLPSAGVGALLAL), 897 to 917 (LFNAPFSLIALIGIMLLIGIV), 953 to 973 (PIMMTTLAALFGALPLVISGG), and 984 to 1004 (ITIVGGLVMSQLLTLYTTPVV).

This sequence belongs to the resistance-nodulation-cell division (RND) (TC 2.A.6) family. MdtC subfamily. As to quaternary structure, part of a tripartite efflux system composed of MdtA, MdtB and MdtC. MdtC forms a heteromultimer with MdtB.

It is found in the cell inner membrane. This chain is Multidrug resistance protein MdtC, found in Citrobacter koseri (strain ATCC BAA-895 / CDC 4225-83 / SGSC4696).